Reading from the N-terminus, the 878-residue chain is Alanine--tRNA ligase (878 aa).

Residues histidine 567, histidine 571, cysteine 669, and histidine 673 each contribute to the Zn(2+) site.

The protein belongs to the class-II aminoacyl-tRNA synthetase family. Requires Zn(2+) as cofactor.

It localises to the cytoplasm. The catalysed reaction is tRNA(Ala) + L-alanine + ATP = L-alanyl-tRNA(Ala) + AMP + diphosphate. Catalyzes the attachment of alanine to tRNA(Ala) in a two-step reaction: alanine is first activated by ATP to form Ala-AMP and then transferred to the acceptor end of tRNA(Ala). Also edits incorrectly charged Ser-tRNA(Ala) and Gly-tRNA(Ala) via its editing domain. This Rickettsia felis (strain ATCC VR-1525 / URRWXCal2) (Rickettsia azadi) protein is Alanine--tRNA ligase.